A 510-amino-acid chain; its full sequence is Serine/threonine protein phosphatase 2A 59 kDa regulatory subunit B' eta isoform (510 aa).

A disordered region spans residues methionine 1–valine 87. Basic residues predominate over residues proline 10–histidine 19. Residues histidine 27–serine 42 are compositionally biased toward low complexity.

The protein belongs to the phosphatase 2A regulatory subunit B56 family. As to quaternary structure, PP2A consists of a common heteromeric enzyme, composed of a catalytic subunit (subunits C), a constant regulatory subunit (subunit A), and a variety of regulatory subunits such as subunits B (the R2/B/PR55/B55, R3/B''/PR72/PR130/PR59 and R5/B'/B56 families). Interacts with BZR1. Interacts with BRI1.

Its subcellular location is the nucleus. It localises to the nucleolus. The protein resides in the cytoplasm. Its function is as follows. The B regulatory subunit may modulate substrate selectivity and catalytic activity, and may also direct the localization of the catalytic enzyme to a particular subcellular compartment. The holoenzyme composed of PP2AA1, PP2A4 and B'ETA acts as negative regulator of plant innate immunity by controlling BAK1 phosphorylation state and activation in surface-localized immune receptor complexes. Required for the formation of the PP2A holoenzyme that negatively regulates brassinosteroid signaling by dephosphorylating and inactivating BRI1 in the cytoplasm. The polypeptide is Serine/threonine protein phosphatase 2A 59 kDa regulatory subunit B' eta isoform (B'ETA) (Arabidopsis thaliana (Mouse-ear cress)).